A 175-amino-acid polypeptide reads, in one-letter code: Nucleoside diphosphate kinase 6 (175 aa).

6 residues coordinate ATP: K8, F57, R85, T91, R105, and N115. H118 (pros-phosphohistidine intermediate) is an active-site residue.

The protein belongs to the NDK family. Mg(2+) serves as cofactor.

It catalyses the reaction a 2'-deoxyribonucleoside 5'-diphosphate + ATP = a 2'-deoxyribonucleoside 5'-triphosphate + ADP. The enzyme catalyses a ribonucleoside 5'-diphosphate + ATP = a ribonucleoside 5'-triphosphate + ADP. In terms of biological role, major role in the synthesis of nucleoside triphosphates other than ATP. The ATP gamma phosphate is transferred to the NDP beta phosphate via a ping-pong mechanism, using a phosphorylated active-site intermediate. The chain is Nucleoside diphosphate kinase 6 (Nme6) from Rattus norvegicus (Rat).